A 311-amino-acid polypeptide reads, in one-letter code: UDP-N-acetylenolpyruvoylglucosamine reductase (311 aa).

Residues 34-198 (MGGAADLFIT…LEGTFRLQKG (165 aa)) enclose the FAD-binding PCMH-type domain. Arg-177 is a catalytic residue. Ser-227 serves as the catalytic Proton donor. Glu-297 is a catalytic residue.

Belongs to the MurB family. The cofactor is FAD.

Its subcellular location is the cytoplasm. The catalysed reaction is UDP-N-acetyl-alpha-D-muramate + NADP(+) = UDP-N-acetyl-3-O-(1-carboxyvinyl)-alpha-D-glucosamine + NADPH + H(+). It functions in the pathway cell wall biogenesis; peptidoglycan biosynthesis. In terms of biological role, cell wall formation. The sequence is that of UDP-N-acetylenolpyruvoylglucosamine reductase from Shouchella clausii (strain KSM-K16) (Alkalihalobacillus clausii).